We begin with the raw amino-acid sequence, 98 residues long: Protein E7 (98 aa).

The segment at 1–40 (MRGETPTLQDYVLDLQPEATDLHCYEQLPDSSDEEDVIDS) is E7 terminal domain. The LXCXE motif; interaction with host RB1 and TMEM173/STING signature appears at 22 to 26 (LHCYE). The segment at 58–94 (CCQCKSTLRLCVQSTQVDIRILQELLMGSFGIVCPNC) is a zinc-finger region. A Nuclear export signal motif is present at residues 76–84 (IRILQELLM).

It belongs to the papillomaviridae E7 protein family. Homodimer. Homooligomer. Interacts with host RB1; this interaction induces dissociation of RB1-E2F1 complex thereby disrupting RB1 activity. Interacts with host EP300; this interaction represses EP300 transcriptional activity. Interacts with protein E2; this interaction inhibits E7 oncogenic activity. Interacts with host TMEM173/STING; this interaction impairs the ability of TMEM173/STING to sense cytosolic DNA and promote the production of type I interferon (IFN-alpha and IFN-beta). Highly phosphorylated.

The protein resides in the host cytoplasm. The protein localises to the host nucleus. E7 protein has both transforming and trans-activating activities. Disrupts the function of host retinoblastoma protein RB1/pRb, which is a key regulator of the cell cycle. Induces the disassembly of the E2F1 transcription factors from RB1, with subsequent transcriptional activation of E2F1-regulated S-phase genes. Inactivation of the ability of RB1 to arrest the cell cycle is critical for cellular transformation, uncontrolled cellular growth and proliferation induced by viral infection. Stimulation of progression from G1 to S phase allows the virus to efficiently use the cellular DNA replicating machinery to achieve viral genome replication. Interferes with histone deacetylation mediated by HDAC1 and HDAC2, leading to activation of transcription. Its function is as follows. Plays a role in viral genome replication by driving entry of quiescent cells into the cell cycle. Stimulation of progression from G1 to S phase allows the virus to efficiently use the cellular DNA replicating machinery to achieve viral genome replication. E7 protein has both transforming and trans-activating activities. Induces the disassembly of the E2F1 transcription factor from RB1, with subsequent transcriptional activation of E2F1-regulated S-phase genes. Interferes with host histone deacetylation mediated by HDAC1 and HDAC2, leading to transcription activation. Also plays a role in the inhibition of both antiviral and antiproliferative functions of host interferon alpha. Interaction with host TMEM173/STING impairs the ability of TMEM173/STING to sense cytosolic DNA and promote the production of type I interferon (IFN-alpha and IFN-beta). This Homo sapiens (Human) protein is Protein E7.